A 361-amino-acid chain; its full sequence is Queuine tRNA-ribosyltransferase (361 aa).

The active-site Proton acceptor is Asp92. Substrate contacts are provided by residues 92 to 96 (DSGGF), Asp146, Gln189, and Gly216. Residues 247 to 253 (GVGKPAD) are RNA binding. Residue Asp266 is the Nucleophile of the active site. An RNA binding; important for wobble base 34 recognition region spans residues 271 to 275 (TRSGR). Residues Cys304, Cys306, Cys309, and His335 each coordinate Zn(2+).

This sequence belongs to the queuine tRNA-ribosyltransferase family. In terms of assembly, homodimer. Within each dimer, one monomer is responsible for RNA recognition and catalysis, while the other monomer binds to the replacement base PreQ1. It depends on Zn(2+) as a cofactor.

The enzyme catalyses 7-aminomethyl-7-carbaguanine + guanosine(34) in tRNA = 7-aminomethyl-7-carbaguanosine(34) in tRNA + guanine. Its pathway is tRNA modification; tRNA-queuosine biosynthesis. Functionally, catalyzes the base-exchange of a guanine (G) residue with the queuine precursor 7-aminomethyl-7-deazaguanine (PreQ1) at position 34 (anticodon wobble position) in tRNAs with GU(N) anticodons (tRNA-Asp, -Asn, -His and -Tyr). Catalysis occurs through a double-displacement mechanism. The nucleophile active site attacks the C1' of nucleotide 34 to detach the guanine base from the RNA, forming a covalent enzyme-RNA intermediate. The proton acceptor active site deprotonates the incoming PreQ1, allowing a nucleophilic attack on the C1' of the ribose to form the product. After dissociation, two additional enzymatic reactions on the tRNA convert PreQ1 to queuine (Q), resulting in the hypermodified nucleoside queuosine (7-(((4,5-cis-dihydroxy-2-cyclopenten-1-yl)amino)methyl)-7-deazaguanosine). The chain is Queuine tRNA-ribosyltransferase from Rickettsia felis (strain ATCC VR-1525 / URRWXCal2) (Rickettsia azadi).